Here is a 379-residue protein sequence, read N- to C-terminus: Anhydro-N-acetylmuramic acid kinase (379 aa).

ATP is bound at residue 9–16; it reads GTSVDGID.

The protein belongs to the anhydro-N-acetylmuramic acid kinase family.

The enzyme catalyses 1,6-anhydro-N-acetyl-beta-muramate + ATP + H2O = N-acetyl-D-muramate 6-phosphate + ADP + H(+). It functions in the pathway amino-sugar metabolism; 1,6-anhydro-N-acetylmuramate degradation. It participates in cell wall biogenesis; peptidoglycan recycling. In terms of biological role, catalyzes the specific phosphorylation of 1,6-anhydro-N-acetylmuramic acid (anhMurNAc) with the simultaneous cleavage of the 1,6-anhydro ring, generating MurNAc-6-P. Is required for the utilization of anhMurNAc either imported from the medium or derived from its own cell wall murein, and thus plays a role in cell wall recycling. The polypeptide is Anhydro-N-acetylmuramic acid kinase (Acaryochloris marina (strain MBIC 11017)).